Here is a 581-residue protein sequence, read N- to C-terminus: Adenine deaminase (581 aa).

Belongs to the metallo-dependent hydrolases superfamily. Adenine deaminase family. Mn(2+) serves as cofactor.

The enzyme catalyses adenine + H2O + H(+) = hypoxanthine + NH4(+). This Brucella melitensis biotype 1 (strain ATCC 23456 / CCUG 17765 / NCTC 10094 / 16M) protein is Adenine deaminase.